The chain runs to 555 residues: Urocanate hydratase (555 aa).

NAD(+) contacts are provided by residues 52–53 (GG), Gln-130, 176–178 (GMG), Glu-196, Arg-201, 242–243 (NA), 263–267 (QTSAH), 273–274 (YL), and Tyr-322. Residue Cys-410 is part of the active site. NAD(+) is bound at residue Gly-492.

The protein belongs to the urocanase family. NAD(+) serves as cofactor.

The protein localises to the cytoplasm. It catalyses the reaction 4-imidazolone-5-propanoate = trans-urocanate + H2O. It participates in amino-acid degradation; L-histidine degradation into L-glutamate; N-formimidoyl-L-glutamate from L-histidine: step 2/3. Catalyzes the conversion of urocanate to 4-imidazolone-5-propionate. In Shewanella baltica (strain OS223), this protein is Urocanate hydratase.